We begin with the raw amino-acid sequence, 165 residues long: 2-C-methyl-D-erythritol 2,4-cyclodiphosphate synthase (165 aa).

D8 and H10 together coordinate a divalent metal cation. Residues 8–10 (DVH) and 34–35 (HS) each bind 4-CDP-2-C-methyl-D-erythritol 2-phosphate. H42 is an a divalent metal cation binding site. Residues 56–58 (DIG), 61–65 (FPDTD), 100–106 (AQAPKMA), 132–135 (TTTE), F139, and R142 contribute to the 4-CDP-2-C-methyl-D-erythritol 2-phosphate site.

Belongs to the IspF family. As to quaternary structure, homotrimer. It depends on a divalent metal cation as a cofactor.

It catalyses the reaction 4-CDP-2-C-methyl-D-erythritol 2-phosphate = 2-C-methyl-D-erythritol 2,4-cyclic diphosphate + CMP. It functions in the pathway isoprenoid biosynthesis; isopentenyl diphosphate biosynthesis via DXP pathway; isopentenyl diphosphate from 1-deoxy-D-xylulose 5-phosphate: step 4/6. In terms of biological role, involved in the biosynthesis of isopentenyl diphosphate (IPP) and dimethylallyl diphosphate (DMAPP), two major building blocks of isoprenoid compounds. Catalyzes the conversion of 4-diphosphocytidyl-2-C-methyl-D-erythritol 2-phosphate (CDP-ME2P) to 2-C-methyl-D-erythritol 2,4-cyclodiphosphate (ME-CPP) with a corresponding release of cytidine 5-monophosphate (CMP). This Pectobacterium atrosepticum (strain SCRI 1043 / ATCC BAA-672) (Erwinia carotovora subsp. atroseptica) protein is 2-C-methyl-D-erythritol 2,4-cyclodiphosphate synthase.